A 362-amino-acid polypeptide reads, in one-letter code: Class I histocompatibility antigen, Gogo-B*0102 alpha chain (362 aa).

Positions 1–24 are cleaved as a signal peptide; that stretch reads MRVTAPRTLLLLLSAALALTETWA. Residues 25 to 114 are alpha-1; that stretch reads GSHSMRYFDT…ALRYYNQSEA (90 aa). Over 25–308 the chain is Extracellular; that stretch reads GSHSMRYFDT…EPSSQSTIPI (284 aa). An N-linked (GlcNAc...) asparagine glycan is attached at N110. Residues 115–206 form an alpha-2 region; it reads GSHTFQRMFG…ENGRETLQRA (92 aa). Intrachain disulfides connect C125/C188 and C227/C283. The alpha-3 stretch occupies residues 207–298; it reads DTPKTHVTHH…GLPKPLTLRW (92 aa). Residues 209-295 enclose the Ig-like C1-type domain; sequence PKTHVTHHPI…QHEGLPKPLT (87 aa). The segment at 299–308 is connecting peptide; sequence EPSSQSTIPI. Residues 309–332 traverse the membrane as a helical segment; that stretch reads VGIVAGLAVLAVVVIGAVVTAVIC. Topologically, residues 333–362 are cytoplasmic; the sequence is RRKSSGGKGGSYSQAASSDSAQGSDVSLTA. The interval 335 to 362 is disordered; that stretch reads KSSGGKGGSYSQAASSDSAQGSDVSLTA. A compositionally biased stretch (low complexity) spans 343-362; sequence SYSQAASSDSAQGSDVSLTA.

Belongs to the MHC class I family. Heterodimer of an alpha chain and a beta chain (beta-2-microglobulin).

It localises to the membrane. Its function is as follows. Involved in the presentation of foreign antigens to the immune system. This chain is Class I histocompatibility antigen, Gogo-B*0102 alpha chain, found in Gorilla gorilla gorilla (Western lowland gorilla).